The chain runs to 864 residues: Bifunctional uridylyltransferase/uridylyl-removing enzyme (864 aa).

Positions 1-328 (MLFPYFPLSE…QTNEPVQVRL (328 aa)) are uridylyltransferase. The uridylyl-removing stretch occupies residues 329 to 686 (LDKEFQCVNN…ISNRFSEGGT (358 aa)). The HD domain maps to 446-562 (VDEHIVRTLL…LHFAEAVQNN (117 aa)). ACT domains lie at 687–766 (EIFV…TFRA) and 793–864 (EMEL…LEPK).

Belongs to the GlnD family. The cofactor is Mg(2+).

The catalysed reaction is [protein-PII]-L-tyrosine + UTP = [protein-PII]-uridylyl-L-tyrosine + diphosphate. It carries out the reaction [protein-PII]-uridylyl-L-tyrosine + H2O = [protein-PII]-L-tyrosine + UMP + H(+). With respect to regulation, uridylyltransferase (UTase) activity is inhibited by glutamine, while glutamine activates uridylyl-removing (UR) activity. Its function is as follows. Modifies, by uridylylation and deuridylylation, the PII regulatory proteins (GlnB and homologs), in response to the nitrogen status of the cell that GlnD senses through the glutamine level. Under low glutamine levels, catalyzes the conversion of the PII proteins and UTP to PII-UMP and PPi, while under higher glutamine levels, GlnD hydrolyzes PII-UMP to PII and UMP (deuridylylation). Thus, controls uridylylation state and activity of the PII proteins, and plays an important role in the regulation of nitrogen assimilation and metabolism. This Pasteurella multocida (strain Pm70) protein is Bifunctional uridylyltransferase/uridylyl-removing enzyme.